A 240-amino-acid chain; its full sequence is MKNKSVEMLIEGAKEWGIFLEMFHVEHFQKYYALLLEWNQKMNLTAITEESEVVIKHFLDSLSVVKSGKIKEEEKIIDVGTGAGFPCIPLKIVFPKLKATLLDSSKKRITFLEEVINKLGINEIELIHGRAEDIGKDIKYREQFDLSVARAVAPLNILLEYTLPFVKVDGYFIALKGREIEEEIENSQRALKELKGEIEEVKEIKLPYSDIVHHLVIIKKIDNCPTKYPRRANAIQRSPL.

S-adenosyl-L-methionine contacts are provided by residues glycine 80, phenylalanine 85, 103 to 105, 131 to 132, and arginine 150; these read DSS and AE.

This sequence belongs to the methyltransferase superfamily. RNA methyltransferase RsmG family.

Its subcellular location is the cytoplasm. Its function is as follows. Specifically methylates the N7 position of a guanine in 16S rRNA. This Thermoanaerobacter sp. (strain X514) protein is Ribosomal RNA small subunit methyltransferase G.